Here is a 298-residue protein sequence, read N- to C-terminus: Probable phosphoserine phosphatase (298 aa).

D82 acts as the Nucleophile in catalysis. Residues D82 and D84 each contribute to the Mg(2+) site. The active-site Proton donor is D84. Substrate-binding positions include E91, R127, 170-171 (SG), and K217. Position 240 (D240) interacts with Mg(2+). Residue N243 coordinates substrate.

Belongs to the HAD-like hydrolase superfamily. SerB family. Mg(2+) serves as cofactor.

It catalyses the reaction O-phospho-L-serine + H2O = L-serine + phosphate. The enzyme catalyses O-phospho-D-serine + H2O = D-serine + phosphate. It functions in the pathway amino-acid biosynthesis; L-serine biosynthesis; L-serine from 3-phospho-D-glycerate: step 3/3. The polypeptide is Probable phosphoserine phosphatase (Schizosaccharomyces pombe (strain 972 / ATCC 24843) (Fission yeast)).